A 419-amino-acid polypeptide reads, in one-letter code: Satellite RNA 48 kDa protein (419 aa).

The segment covering 1-27 (MQKTMTRHLSRNRKPHEKVSHVPRRGP) has biased composition (basic residues). The segment at 1–66 (MQKTMTRHLS…SLGRKPYNPG (66 aa)) is disordered.

The protein belongs to the nepovirus satellite RNA 48 kDa protein family.

This is Satellite RNA 48 kDa protein from Allium porrum (Leek).